The primary structure comprises 576 residues: Alkaline phosphatase PhoD (576 aa).

The N-terminal stretch at 1–32 (MNSLLHHSFLKTVFSSLAIAIVTSSLSSVTIA) is a signal peptide. Residues D68 and T107 each contribute to the Zn(2+) site. The Phosphothreonine intermediate role is filled by T107. A disulfide bond links C108 and C144. Substrate is bound by residues N128 and 188–190 (KDR). A disulfide bond links C248 and C332. 5 residues coordinate Zn(2+): D318, H322, D363, H364, and H508. C562 and C573 are joined by a disulfide.

In terms of assembly, monomer. It depends on Zn(2+) as a cofactor.

It carries out the reaction a phosphate monoester + H2O = an alcohol + phosphate. In terms of biological role, alkaline phosphatase with broad substrate specificity. Has phosphatase activity towards nucleotide and sugar phosphates with a preference to nucleotide phosphates. Has no phosphodiesterase activity. The protein is Alkaline phosphatase PhoD of Zymomonas mobilis subsp. mobilis (strain ATCC 31821 / ZM4 / CP4).